Reading from the N-terminus, the 1486-residue chain is Chromosome partition protein MukB (1486 aa).

Glycine 34–serine 41 is an ATP binding site. 3 coiled-coil regions span residues leucine 326 to glutamine 418, leucine 444 to glutamine 480, and arginine 509 to valine 603. The interval proline 666–arginine 783 is flexible hinge. Coiled coils occupy residues glutamate 835 to glutamate 923, glutamate 977 to alanine 1115, and valine 1209 to serine 1266.

It belongs to the SMC family. MukB subfamily. As to quaternary structure, homodimerization via its hinge domain. Binds to DNA via its C-terminal region. Interacts, and probably forms a ternary complex, with MukE and MukF via its C-terminal region. The complex formation is stimulated by calcium or magnesium. Interacts with tubulin-related protein FtsZ.

Its subcellular location is the cytoplasm. The protein localises to the nucleoid. Its function is as follows. Plays a central role in chromosome condensation, segregation and cell cycle progression. Functions as a homodimer, which is essential for chromosome partition. Involved in negative DNA supercoiling in vivo, and by this means organize and compact chromosomes. May achieve or facilitate chromosome segregation by condensation DNA from both sides of a centrally located replisome during cell division. The polypeptide is Chromosome partition protein MukB (Escherichia coli O1:K1 / APEC).